A 278-amino-acid polypeptide reads, in one-letter code: Diaminopimelate epimerase (278 aa).

Residues N13, Q46, and N67 each coordinate substrate. Residue C76 is the Proton donor of the active site. Residues G77–N78, N160, N193, and E211–R212 contribute to the substrate site. C220 acts as the Proton acceptor in catalysis. G221–T222 contributes to the substrate binding site.

This sequence belongs to the diaminopimelate epimerase family. In terms of assembly, homodimer.

The protein resides in the cytoplasm. It catalyses the reaction (2S,6S)-2,6-diaminopimelate = meso-2,6-diaminopimelate. It functions in the pathway amino-acid biosynthesis; L-lysine biosynthesis via DAP pathway; DL-2,6-diaminopimelate from LL-2,6-diaminopimelate: step 1/1. Functionally, catalyzes the stereoinversion of LL-2,6-diaminopimelate (L,L-DAP) to meso-diaminopimelate (meso-DAP), a precursor of L-lysine and an essential component of the bacterial peptidoglycan. The polypeptide is Diaminopimelate epimerase (Thioalkalivibrio sulfidiphilus (strain HL-EbGR7)).